The primary structure comprises 439 residues: O-fucosyltransferase 13 (439 aa).

Residues 8 to 28 traverse the membrane as a helical; Signal-anchor for type II membrane protein segment; it reads PLFVFVLTFSLLLVVILLSPS. 2 N-linked (GlcNAc...) asparagine glycosylation sites follow: N104 and N119. A substrate-binding site is contributed by 238 to 240; that stretch reads HLR. N293 carries an N-linked (GlcNAc...) asparagine glycan.

Belongs to the glycosyltransferase GT106 family.

It is found in the membrane. Its pathway is glycan metabolism. This chain is O-fucosyltransferase 13, found in Arabidopsis thaliana (Mouse-ear cress).